Consider the following 151-residue polypeptide: Large ribosomal subunit protein uL22 (151 aa).

Residues 1 to 25 (MARINYSVKEDPETTSKAMGSELHI) form a disordered region.

This sequence belongs to the universal ribosomal protein uL22 family. As to quaternary structure, part of the 50S ribosomal subunit.

Functionally, this protein binds specifically to 23S rRNA. It makes multiple contacts with different domains of the 23S rRNA in the assembled 50S subunit and ribosome. In terms of biological role, the globular domain of the protein is located near the polypeptide exit tunnel on the outside of the subunit, while an extended beta-hairpin is found that lines the wall of the exit tunnel in the center of the 70S ribosome. This Methanosarcina barkeri (strain Fusaro / DSM 804) protein is Large ribosomal subunit protein uL22.